A 367-amino-acid chain; its full sequence is tRNA uridine(34) hydroxylase (367 aa).

Residues 159-253 (EDENSIVVDV…YAHEVSQKGL (95 aa)) enclose the Rhodanese domain. C213 acts as the Cysteine persulfide intermediate in catalysis.

This sequence belongs to the TrhO family.

The enzyme catalyses uridine(34) in tRNA + AH2 + O2 = 5-hydroxyuridine(34) in tRNA + A + H2O. Its function is as follows. Catalyzes oxygen-dependent 5-hydroxyuridine (ho5U) modification at position 34 in tRNAs. The protein is tRNA uridine(34) hydroxylase of Leptospira interrogans serogroup Icterohaemorrhagiae serovar Lai (strain 56601).